The sequence spans 213 residues: Pyrrolidone-carboxylate peptidase (213 aa).

Residues Glu80, Cys143, and His166 contribute to the active site.

The protein belongs to the peptidase C15 family. In terms of assembly, homotetramer.

Its subcellular location is the cytoplasm. The enzyme catalyses Release of an N-terminal pyroglutamyl group from a polypeptide, the second amino acid generally not being Pro.. In terms of biological role, removes 5-oxoproline from various penultimate amino acid residues except L-proline. This is Pyrrolidone-carboxylate peptidase from Clavibacter michiganensis subsp. michiganensis (strain NCPPB 382).